Consider the following 254-residue polypeptide: 5-oxoprolinase subunit A (254 aa).

The protein belongs to the LamB/PxpA family. In terms of assembly, forms a complex composed of PxpA, PxpB and PxpC.

It catalyses the reaction 5-oxo-L-proline + ATP + 2 H2O = L-glutamate + ADP + phosphate + H(+). Catalyzes the cleavage of 5-oxoproline to form L-glutamate coupled to the hydrolysis of ATP to ADP and inorganic phosphate. The chain is 5-oxoprolinase subunit A from Carboxydothermus hydrogenoformans (strain ATCC BAA-161 / DSM 6008 / Z-2901).